Here is a 26-residue protein sequence, read N- to C-terminus: KDGYLMGADGCKLCVLTAPYDYCACE.

It belongs to the long (4 C-C) scorpion toxin superfamily. Sodium channel inhibitor family. Beta subfamily. As to expression, expressed by the venom gland.

The protein localises to the secreted. In terms of biological role, beta toxins bind voltage-independently at site-4 of sodium channels (Nav) and shift the voltage of activation toward more negative potentials thereby affecting sodium channel activation and promoting spontaneous and repetitive firing. This toxin is active against mammals and crustaceans. In Tityus discrepans (Venezuelan scorpion), this protein is Toxin TdII-1.